Here is a 191-residue protein sequence, read N- to C-terminus: Penicillin-binding protein activator LpoB (191 aa).

Residues 1 to 16 (MKRYLSLALAALVLTG) form the signal peptide. Cysteine 17 carries the N-palmitoyl cysteine lipid modification. Residue cysteine 17 is the site of S-diacylglycerol cysteine attachment.

It belongs to the LpoB family. Interacts with PBP1b.

The protein localises to the cell outer membrane. In terms of biological role, regulator of peptidoglycan synthesis that is essential for the function of penicillin-binding protein 1B (PBP1b). This is Penicillin-binding protein activator LpoB from Yersinia pestis (strain D182038).